Reading from the N-terminus, the 412-residue chain is Argininosuccinate synthase (412 aa).

Residues 20 to 28 (AYSGGLDTS) and Ala-48 each bind ATP. Positions 100 and 105 each coordinate L-citrulline. Gly-130 lines the ATP pocket. The L-aspartate site is built by Thr-132, Asn-136, and Asp-137. Asn-136 provides a ligand contact to L-citrulline. L-citrulline contacts are provided by Arg-140, Ser-189, Ser-198, Glu-274, and Tyr-286.

It belongs to the argininosuccinate synthase family. Type 1 subfamily. Homotetramer.

It localises to the cytoplasm. It carries out the reaction L-citrulline + L-aspartate + ATP = 2-(N(omega)-L-arginino)succinate + AMP + diphosphate + H(+). Its pathway is amino-acid biosynthesis; L-arginine biosynthesis; L-arginine from L-ornithine and carbamoyl phosphate: step 2/3. This is Argininosuccinate synthase from Shewanella halifaxensis (strain HAW-EB4).